We begin with the raw amino-acid sequence, 208 residues long: FMN-dependent NADH:quinone oxidoreductase 1 (208 aa).

Serine 10 lines the FMN pocket.

The protein belongs to the azoreductase type 1 family. Homodimer. It depends on FMN as a cofactor.

It catalyses the reaction 2 a quinone + NADH + H(+) = 2 a 1,4-benzosemiquinone + NAD(+). It carries out the reaction N,N-dimethyl-1,4-phenylenediamine + anthranilate + 2 NAD(+) = 2-(4-dimethylaminophenyl)diazenylbenzoate + 2 NADH + 2 H(+). Functionally, quinone reductase that provides resistance to thiol-specific stress caused by electrophilic quinones. Contributes to resistance to 2-methylhydroquinone (2-MHQ) and catechol. Also exhibits azoreductase activity. Catalyzes the reductive cleavage of the azo bond in aromatic azo compounds to the corresponding amines. This Bacillus subtilis (strain 168) protein is FMN-dependent NADH:quinone oxidoreductase 1.